Consider the following 550-residue polypeptide: Medium/long-chain-fatty-acid--CoA/3-oxocholest-4-en-26-oate--CoA ligase (550 aa).

ATP contacts are provided by residues 178-186, Asp-419, Arg-434, and Lys-525; that span reads TGGTTGFPK. The segment at 525-550 is disordered; sequence KPDYRWAKEQTEARPADDVHAAHVSA.

Belongs to the ATP-dependent AMP-binding enzyme family.

The enzyme catalyses a medium-chain fatty acid + ATP + CoA = a medium-chain fatty acyl-CoA + AMP + diphosphate. It carries out the reaction a long-chain fatty acid + ATP + CoA = a long-chain fatty acyl-CoA + AMP + diphosphate. The catalysed reaction is (25S)-3-oxocholest-4-en-26-oate + ATP + CoA = (25S)-3-oxocholest-4-en-26-oyl-CoA + AMP + diphosphate. The protein operates within lipid metabolism; fatty acid biosynthesis. It functions in the pathway steroid metabolism; cholesterol metabolism. Functionally, catalyzes the activation of medium/long-chain fatty acids as acyl-coenzyme A (acyl-CoA), which are then transferred to the multifunctional polyketide synthase (PKS) type III for further chain extension. Also involved in the degradation of cholesterol via the degradation of the side chains of C-24 branched-chain sterols. Catalyzes the ATP-dependent CoA thioesterification of the sterol 3-oxocholest-4-en-26-oate to yield 3-oxocholest-4-en-26-oyl-CoA. This Mycobacterium marinum (strain ATCC BAA-535 / M) protein is Medium/long-chain-fatty-acid--CoA/3-oxocholest-4-en-26-oate--CoA ligase.